A 556-amino-acid polypeptide reads, in one-letter code: Formate--tetrahydrofolate ligase (556 aa).

Position 65 to 72 (65 to 72) interacts with ATP; it reads TPAGEGKS.

The protein belongs to the formate--tetrahydrofolate ligase family.

The catalysed reaction is (6S)-5,6,7,8-tetrahydrofolate + formate + ATP = (6R)-10-formyltetrahydrofolate + ADP + phosphate. It functions in the pathway one-carbon metabolism; tetrahydrofolate interconversion. This is Formate--tetrahydrofolate ligase from Streptococcus equi subsp. zooepidemicus (strain MGCS10565).